A 722-amino-acid polypeptide reads, in one-letter code: Exocyst complex component 3-like protein 4 (722 aa).

2 disordered regions span residues 1–53 and 92–131; these read MPSP…LGSL and NDGPATGHSQATPEVPSGVMNGVSQQASTGAASEELKPEA. Residues 34–46 show a composition bias toward basic and acidic residues; it reads SRKEPNAHRKDGT. Ser52 is modified (phosphoserine). A compositionally biased stretch (polar residues) spans 113–122; the sequence is GVSQQASTGA. Ser513 is modified (phosphoserine).

It belongs to the SEC6 family.

This is Exocyst complex component 3-like protein 4 (EXOC3L4) from Homo sapiens (Human).